The following is a 161-amino-acid chain: Transcription elongation factor GreA (161 aa).

It belongs to the GreA/GreB family.

Necessary for efficient RNA polymerase transcription elongation past template-encoded arresting sites. The arresting sites in DNA have the property of trapping a certain fraction of elongating RNA polymerases that pass through, resulting in locked ternary complexes. Cleavage of the nascent transcript by cleavage factors such as GreA or GreB allows the resumption of elongation from the new 3'terminus. GreA releases sequences of 2 to 3 nucleotides. The protein is Transcription elongation factor GreA of Desulfotalea psychrophila (strain LSv54 / DSM 12343).